We begin with the raw amino-acid sequence, 943 residues long: Isoleucine--tRNA ligase (943 aa).

The short motif at Pro-58–His-68 is the 'HIGH' region element. Residue Glu-567 coordinates L-isoleucyl-5'-AMP. The 'KMSKS' region signature appears at Lys-608–Ser-612. Lys-611 is an ATP binding site. Zn(2+) contacts are provided by Cys-906, Cys-909, Cys-926, and Cys-929.

Belongs to the class-I aminoacyl-tRNA synthetase family. IleS type 1 subfamily. In terms of assembly, monomer. Requires Zn(2+) as cofactor.

The protein localises to the cytoplasm. The enzyme catalyses tRNA(Ile) + L-isoleucine + ATP = L-isoleucyl-tRNA(Ile) + AMP + diphosphate. Functionally, catalyzes the attachment of isoleucine to tRNA(Ile). As IleRS can inadvertently accommodate and process structurally similar amino acids such as valine, to avoid such errors it has two additional distinct tRNA(Ile)-dependent editing activities. One activity is designated as 'pretransfer' editing and involves the hydrolysis of activated Val-AMP. The other activity is designated 'posttransfer' editing and involves deacylation of mischarged Val-tRNA(Ile). This chain is Isoleucine--tRNA ligase, found in Pseudomonas putida (strain W619).